Reading from the N-terminus, the 686-residue chain is Pentatricopeptide repeat-containing protein 1, mitochondrial (686 aa).

The span at 55 to 67 shows a compositional bias: polar residues; the sequence is RMSSLCSDSSTPV. Positions 55-79 are disordered; sequence RMSSLCSDSSTPVAPQEEEEEESFG. PPR repeat units lie at residues 124-160, 161-195, 196-234, 235-269, and 270-306; these read TPYWYFLQCKRLLKEGKLAEALDLFERQMLKEERLQP, LECNYTVLIGGCGRVGYLKKAFRLFNDMKKRDLEP, SDATYTALFNVCAESPWKDSALQSALKLRQQLQAQNFQL, NLKTYHALLKVAAKCADLRVCLEVFKEIIQKGHAV, and TEETFCFLLMGCIQDKKTGFRQAMQVWRQMLSLGIKP. The interval 383 to 407 is disordered; that stretch reads KLEGPPAFPEARETSRTQPEVETKA. Over residues 392–407 the composition is skewed to basic and acidic residues; that stretch reads EARETSRTQPEVETKA. 2 PPR repeats span residues 508-542 and 575-609; these read DITFFNTLIRKKSKLGDLEGAKALLPILAKKGIVP and NTHIYSTLINAALKKLDYTYLISILKDMRRNSVPV.

The protein belongs to the PTCD1 family. As to quaternary structure, associates with mitochondrial leucine tRNAs. Interacts with ELAC2.

Its subcellular location is the mitochondrion matrix. Its function is as follows. Mitochondrial protein implicated in negative regulation of leucine tRNA levels, as well as negative regulation of mitochondria-encoded proteins and COX activity. Also affects the 3'-processing of mitochondrial tRNAs. This Rattus norvegicus (Rat) protein is Pentatricopeptide repeat-containing protein 1, mitochondrial (Ptcd1).